The primary structure comprises 252 residues: MLAKRIIPCLDVNAGRVVKGVNFVELRDAGDPVEIARRYDEQGADEITFLDITASSDARDIILHVVEQVAEQVFIPLTVGGGVRTVEDVRRLLNAGADKVSINTAAVNNPQVVAEAAGKVGSQCIVVAIDAKQTAPGRWQVFTHGGRNNTGLDAVEWAQKVAALGAGEILLTSMDRDGTKIGFDLGLTRAVADAVPIPVIASGGVGTLEHLAEGVSEGRADAVLAASIFHFGQHTVREAKELMRSRGIEVRL.

Active-site residues include Asp-11 and Asp-130.

The protein belongs to the HisA/HisF family. As to quaternary structure, heterodimer of HisH and HisF.

Its subcellular location is the cytoplasm. It carries out the reaction 5-[(5-phospho-1-deoxy-D-ribulos-1-ylimino)methylamino]-1-(5-phospho-beta-D-ribosyl)imidazole-4-carboxamide + L-glutamine = D-erythro-1-(imidazol-4-yl)glycerol 3-phosphate + 5-amino-1-(5-phospho-beta-D-ribosyl)imidazole-4-carboxamide + L-glutamate + H(+). It participates in amino-acid biosynthesis; L-histidine biosynthesis; L-histidine from 5-phospho-alpha-D-ribose 1-diphosphate: step 5/9. In terms of biological role, IGPS catalyzes the conversion of PRFAR and glutamine to IGP, AICAR and glutamate. The HisF subunit catalyzes the cyclization activity that produces IGP and AICAR from PRFAR using the ammonia provided by the HisH subunit. The chain is Imidazole glycerol phosphate synthase subunit HisF from Aromatoleum aromaticum (strain DSM 19018 / LMG 30748 / EbN1) (Azoarcus sp. (strain EbN1)).